Reading from the N-terminus, the 1213-residue chain is DNA-directed RNA polymerase subunit beta' (1213 aa).

4 residues coordinate Zn(2+): C60, C62, C75, and C78. Mg(2+) contacts are provided by D450, D452, and D454. The Zn(2+) site is built by C819, C893, C900, and C903.

It belongs to the RNA polymerase beta' chain family. As to quaternary structure, the RNAP catalytic core consists of 2 alpha, 1 beta, 1 beta' and 1 omega subunit. When a sigma factor is associated with the core the holoenzyme is formed, which can initiate transcription. Mg(2+) serves as cofactor. Zn(2+) is required as a cofactor.

It catalyses the reaction RNA(n) + a ribonucleoside 5'-triphosphate = RNA(n+1) + diphosphate. Functionally, DNA-dependent RNA polymerase catalyzes the transcription of DNA into RNA using the four ribonucleoside triphosphates as substrates. The polypeptide is DNA-directed RNA polymerase subunit beta' (Streptococcus pyogenes serotype M4 (strain MGAS10750)).